Here is a 417-residue protein sequence, read N- to C-terminus: NADH-quinone oxidoreductase subunit D (417 aa).

Belongs to the complex I 49 kDa subunit family. As to quaternary structure, NDH-1 is composed of 14 different subunits. Subunits NuoB, C, D, E, F, and G constitute the peripheral sector of the complex.

It localises to the cell inner membrane. It carries out the reaction a quinone + NADH + 5 H(+)(in) = a quinol + NAD(+) + 4 H(+)(out). Its function is as follows. NDH-1 shuttles electrons from NADH, via FMN and iron-sulfur (Fe-S) centers, to quinones in the respiratory chain. The immediate electron acceptor for the enzyme in this species is believed to be ubiquinone. Couples the redox reaction to proton translocation (for every two electrons transferred, four hydrogen ions are translocated across the cytoplasmic membrane), and thus conserves the redox energy in a proton gradient. In Nitrosospira multiformis (strain ATCC 25196 / NCIMB 11849 / C 71), this protein is NADH-quinone oxidoreductase subunit D.